The chain runs to 1291 residues: Ethylene-insensitive protein 2.2 (1291 aa).

6 helical membrane passes run 18 to 38, 48 to 68, 96 to 116, 128 to 148, 155 to 175, and 195 to 215; these read ALPA…PGKW, FGFD…LCQY, FLGV…ILGI, LSTC…FATL, SFLS…GVLI, and SAFA…FFLH. Asn-227 carries an N-linked (GlcNAc...) asparagine glycan. The next 7 membrane-spanning stretches (helical) occupy residues 231-251, 253-273, 288-308, 335-355, 356-376, 393-413, and 441-461; these read GALC…IYLV, YVLM…LLTF, VALC…ALTW, IIAV…GIYQ, LLIF…IPLF, FLEF…IIFV, and VLLI…ATPL. The segment at 498–518 is disordered; it reads TEEESIGGQEQLSGPGKSAES. Asn-550 carries an N-linked (GlcNAc...) asparagine glycan. The segment at 614–662 is disordered; sequence AEKEDDEGDSWEPEESSKGVPGSTSSLTSDGPGSFRSLSGKSDEGGNGA. Positions 617 to 627 are enriched in acidic residues; that stretch reads EDDEGDSWEPE. The span at 635–653 shows a compositional bias: polar residues; it reads GSTSSLTSDGPGSFRSLSG. A phosphoserine mark is found at Ser-647 and Ser-664. 2 disordered regions span residues 742–768 and 787–808; these read QIHS…GGQR and GPSR…TLPS. The span at 759–768 shows a compositional bias: polar residues; that stretch reads NIDSSYGGQR. Thr-818 bears the Phosphothreonine mark. A disordered region spans residues 836–856; it reads GSSSLNGQMDSPAPISPSLGP. N-linked (GlcNAc...) asparagine glycosylation occurs at Asn-891. A Phosphoserine modification is found at Ser-923. Asn-1027 carries N-linked (GlcNAc...) asparagine glycosylation. The interval 1210 to 1229 is disordered; sequence HRSSPPVSNGMLPPASKPGR. A Nuclear localization signal motif is present at residues 1262 to 1269; that stretch reads DVAFPKGK.

Belongs to the NRAMP (TC 2.A.55) family.

It is found in the endoplasmic reticulum membrane. It localises to the nucleus. Its subcellular location is the cytoplasm. Central factor in signaling pathways regulated by ethylene (ET) and involved in various processes including development, plant defense, senescence, nucleotide sugar flux, and tropisms. Functionally, trafficking signal inducing ethylene response. The nuclear localization is both necessary and sufficient to activate EIN3-mediated transcription and ethylene responses. The chain is Ethylene-insensitive protein 2.2 from Populus trichocarpa (Western balsam poplar).